We begin with the raw amino-acid sequence, 414 residues long: Na(+)-translocating NADH-quinone reductase subunit B (414 aa).

A run of 4 helical transmembrane segments spans residues 23–40 (WFALYEAVATVFYTPGLV), 56–76 (IMIMVWFAVFPAMFWGMYNAG), 129–149 (FLPIYATVFLVGGFWEVLFCM), and 164–184 (ILFALIVPPTLPLWQAALGIT). At T236 the chain carries FMN phosphoryl threonine. Helical transmembrane passes span 268-288 (IPGSIGEVSTLALMIGAAMIV), 297-317 (IIAGVMIGMIAVSTLFNVVGS), 325-345 (MPWHWHLVLGGFAFGMFFMAT), 358-378 (WWYGILIGAMCVMIRVVNPAY), and 381-401 (GMMLAILFANLFAPLFDHVVI).

This sequence belongs to the NqrB/RnfD family. As to quaternary structure, composed of six subunits; NqrA, NqrB, NqrC, NqrD, NqrE and NqrF. FMN serves as cofactor.

It is found in the cell inner membrane. The catalysed reaction is a ubiquinone + n Na(+)(in) + NADH + H(+) = a ubiquinol + n Na(+)(out) + NAD(+). Functionally, NQR complex catalyzes the reduction of ubiquinone-1 to ubiquinol by two successive reactions, coupled with the transport of Na(+) ions from the cytoplasm to the periplasm. NqrA to NqrE are probably involved in the second step, the conversion of ubisemiquinone to ubiquinol. The polypeptide is Na(+)-translocating NADH-quinone reductase subunit B (Vibrio parahaemolyticus serotype O3:K6 (strain RIMD 2210633)).